A 207-amino-acid polypeptide reads, in one-letter code: Large ribosomal subunit protein uL4 (207 aa).

The segment at 47–78 is disordered; it reads GTASSKTRAEVRGGGKKPWRQKGTGRARVGSS. Positions 60 to 71 are enriched in basic residues; that stretch reads GGKKPWRQKGTG.

The protein belongs to the universal ribosomal protein uL4 family. In terms of assembly, part of the 50S ribosomal subunit.

One of the primary rRNA binding proteins, this protein initially binds near the 5'-end of the 23S rRNA. It is important during the early stages of 50S assembly. It makes multiple contacts with different domains of the 23S rRNA in the assembled 50S subunit and ribosome. In terms of biological role, forms part of the polypeptide exit tunnel. The protein is Large ribosomal subunit protein uL4 of Syntrophomonas wolfei subsp. wolfei (strain DSM 2245B / Goettingen).